The chain runs to 312 residues: Glyoxylate/hydroxypyruvate reductase A (312 aa).

Arg227 is an active-site residue. The active-site Proton donor is His275.

The protein belongs to the D-isomer specific 2-hydroxyacid dehydrogenase family. GhrA subfamily.

Its subcellular location is the cytoplasm. The catalysed reaction is glycolate + NADP(+) = glyoxylate + NADPH + H(+). It carries out the reaction (R)-glycerate + NAD(+) = 3-hydroxypyruvate + NADH + H(+). It catalyses the reaction (R)-glycerate + NADP(+) = 3-hydroxypyruvate + NADPH + H(+). Catalyzes the NADPH-dependent reduction of glyoxylate and hydroxypyruvate into glycolate and glycerate, respectively. The polypeptide is Glyoxylate/hydroxypyruvate reductase A (Salmonella enteritidis PT4 (strain P125109)).